A 349-amino-acid polypeptide reads, in one-letter code: Ion-translocating oxidoreductase complex subunit D (349 aa).

3 consecutive transmembrane segments (helical) span residues 37–57 (AFFGWGTLVQVLLAIIVALSA), 73–90 (LSDNSAMLTAILIGVAIP), and 124–144 (AMAAYVLLLISFPVQMTTWIA). Thr185 bears the FMN phosphoryl threonine mark. Helical transmembrane passes span 212–232 (ATGVGWFWVNLAYLAGGLVLL), 239–259 (WHISTGVLAGLFIASSVGFLL), 265–285 (GSPLFHLFSGATMLAAFFIAT), 291–311 (ATSPRGRIIFGTLIGILVYII), and 315–335 (GGYPDAFAFAVLLANLCAPFI).

It belongs to the NqrB/RnfD family. In terms of assembly, the complex is composed of six subunits: RnfA, RnfB, RnfC, RnfD, RnfE and RnfG. FMN serves as cofactor.

The protein localises to the cell inner membrane. Part of a membrane-bound complex that couples electron transfer with translocation of ions across the membrane. The chain is Ion-translocating oxidoreductase complex subunit D from Shewanella sp. (strain W3-18-1).